A 313-amino-acid chain; its full sequence is Glutathione synthetase (313 aa).

Residues lysine 125–glutamate 309 enclose the ATP-grasp domain. ATP is bound at residue arginine 151–glycine 207. Mg(2+) contacts are provided by glutamate 280 and asparagine 282.

Belongs to the prokaryotic GSH synthase family. The cofactor is Mg(2+). It depends on Mn(2+) as a cofactor.

The catalysed reaction is gamma-L-glutamyl-L-cysteine + glycine + ATP = glutathione + ADP + phosphate + H(+). The protein operates within sulfur metabolism; glutathione biosynthesis; glutathione from L-cysteine and L-glutamate: step 2/2. The polypeptide is Glutathione synthetase (Mesorhizobium japonicum (strain LMG 29417 / CECT 9101 / MAFF 303099) (Mesorhizobium loti (strain MAFF 303099))).